The primary structure comprises 586 residues: Membrane protein insertase YidC (586 aa).

5 helical membrane passes run 5–25, 371–391, 436–456, 486–506, and 522–542; these read TLIGLVLIALIMMAWFQLMAP, GVIIILFALFIKLVTYPLTMA, LGGCLPTVIQMPLLFAMFYVF, IPLYGDHVSVIPILMGVAVFF, and FMMYLFPGMMLIFFNNMPSGL.

The protein belongs to the OXA1/ALB3/YidC family. Type 1 subfamily. As to quaternary structure, interacts with the Sec translocase complex via SecD. Specifically interacts with transmembrane segments of nascent integral membrane proteins during membrane integration.

Its subcellular location is the cell inner membrane. Functionally, required for the insertion and/or proper folding and/or complex formation of integral membrane proteins into the membrane. Involved in integration of membrane proteins that insert both dependently and independently of the Sec translocase complex, as well as at least some lipoproteins. Aids folding of multispanning membrane proteins. The protein is Membrane protein insertase YidC of Chloroherpeton thalassium (strain ATCC 35110 / GB-78).